The chain runs to 171 residues: CASP-like protein 1C3 (171 aa).

The Cytoplasmic segment spans residues 1-6; the sequence is MVKPKR. A helical membrane pass occupies residues 7-27; the sequence is LLSLLLRLIAFGATLAAVIIM. Topologically, residues 28–52 are extracellular; that stretch reads ATSHEKGSFFALSYEAKYSDTPAFK. Residues 53 to 73 form a helical membrane-spanning segment; that stretch reads YFVIANAIVTVYGFLALFIPS. Residues 74–79 lie on the Cytoplasmic side of the membrane; the sequence is ESPLWR. A helical transmembrane segment spans residues 80–100; the sequence is LVLALDLVFTMLLISSISAAL. Residues 101 to 130 lie on the Extracellular side of the membrane; sequence AVAQVGKKGNSSAGWLPVCGQVTKYCNQVT. Residue Asn110 is glycosylated (N-linked (GlcNAc...) asparagine). A helical transmembrane segment spans residues 131-151; the sequence is GALVAGFIAIITYIILLLYSI. Residues 152–171 lie on the Cytoplasmic side of the membrane; that stretch reads YTFLNSLLGKTPCRLSSPGI.

The protein belongs to the Casparian strip membrane proteins (CASP) family. In terms of assembly, homodimer and heterodimers.

The protein localises to the cell membrane. The chain is CASP-like protein 1C3 from Populus trichocarpa (Western balsam poplar).